Consider the following 351-residue polypeptide: MSFPCKFVASFLLIFNVSSKGAVSKEIRNALETWGALGQDIDLDIPSFQMSDDIDDIRWEKTSDKKKIAQFRKEKETFEEKDAYKLFKNGTLKIKHLKIHDQDSYKVSIYDTKGKNVLEKTFDLKIQERVSEPKISWTCINTTLTCEVMNGTDPELNLYQDGKHVKLSQRVITHKWTTSLSAKFKCTAGNKVSKESRMETVSCPEKGLDIYLIIGICGGGSLLMVFVALLVFYITKRKKQRSRRNDEELEIRAHRVATEERGRKPHQIPASTPQNPAASQHPPPPPGHRSQAPSHRPLPPGHRVQHQPQKRPPAPSGTQVHQQKGPPLPRPRVQPKPPQGAAENSLSPSSN.

An N-terminal signal peptide occupies residues 1-24 (MSFPCKFVASFLLIFNVSSKGAVS). Residues 25–128 (KEIRNALETW…EKTFDLKIQE (104 aa)) enclose the Ig-like V-type domain. Residues 25–209 (KEIRNALETW…TVSCPEKGLD (185 aa)) lie on the Extracellular side of the membrane. The interval 61–75 (KTSDKKKIAQFRKEK) is CD58 binding region 1. Asn89 is a glycosylation site (N-linked (GlcNAc...) asparagine). Positions 106-120 (KVSIYDTKGKNVLEK) are CD58 binding region 2. The Ig-like C2-type domain maps to 129-209 (RVSEPKISWT…TVSCPEKGLD (81 aa)). Disulfide bonds link Cys139–Cys203 and Cys146–Cys186. N-linked (GlcNAc...) asparagine glycans are attached at residues Asn141 and Asn150. A helical transmembrane segment spans residues 210 to 235 (IYLIIGICGGGSLLMVFVALLVFYIT). Topologically, residues 236-351 (KRKKQRSRRN…AENSLSPSSN (116 aa)) are cytoplasmic. Residues 241–351 (RSRRNDEELE…AENSLSPSSN (111 aa)) form a disordered region. Basic and acidic residues predominate over residues 243-262 (RRNDEELEIRAHRVATEERG). The segment covering 326–338 (PPLPRPRVQPKPP) has biased composition (pro residues). Over residues 342–351 (AENSLSPSSN) the composition is skewed to polar residues.

Interacts with CD48. Interacts with CD58 (LFA-3). Interacts with CD2AP. Interacts with PSTPIP1. Interacts with FCGR3A; this interaction modulates NK cell activation and cytotoxicity.

It is found in the cell membrane. In terms of biological role, CD2 interacts with lymphocyte function-associated antigen CD58 (LFA-3) and CD48/BCM1 to mediate adhesion between T-cells and other cell types. CD2 is implicated in the triggering of T-cells, the cytoplasmic domain is implicated in the signaling function. This chain is T-cell surface antigen CD2 (CD2), found in Macaca fascicularis (Crab-eating macaque).